Consider the following 907-residue polypeptide: Polyphosphoinositide phosphatase (907 aa).

Positions 154 to 547 constitute an SAC domain; sequence FQNVDLSSNF…GDTLSLQYGG (394 aa). Positions 707–788 are disordered; sequence GIDPSPFTVR…VKMTDAGDSA (82 aa). Over residues 758 to 770 the composition is skewed to acidic residues; the sequence is SEDDSGTDREEEG.

In terms of assembly, component of the PI(3,5)P2 regulatory complex/PAS complex, at least composed of PIKFYVE, FIG4 and VAC14. VAC14 nucleates the assembly of the complex and serves as a scaffold by pentamerizing into a star-shaped structure, which can bind a single copy each of PIKFYVE and FIG4 and coordinates their activities.

It is found in the endosome membrane. The enzyme catalyses a 1,2-diacyl-sn-glycero-3-phospho-(1D-myo-inositol-3,5-bisphosphate) + H2O = a 1,2-diacyl-sn-glycero-3-phospho-(1D-myo-inositol-3-phosphate) + phosphate. The catalysed reaction is a 1,2-diacyl-sn-glycero-3-phospho-(1D-myo-inositol-4,5-bisphosphate) + H2O = a 1,2-diacyl-sn-glycero-3-phospho-(1D-myo-inositol 4-phosphate) + phosphate. It carries out the reaction a 1,2-diacyl-sn-glycero-3-phospho-(1D-myo-inositol-3,4,5-trisphosphate) + H2O = a 1,2-diacyl-sn-glycero-3-phospho-(1D-myo-inositol-3,4-bisphosphate) + phosphate. It catalyses the reaction O-phospho-L-seryl-[protein] + H2O = L-seryl-[protein] + phosphate. Its function is as follows. Dual specificity phosphatase component of the PI(3,5)P2 regulatory complex which regulates both the synthesis and turnover of phosphatidylinositol 3,5-bisphosphate (PtdIns(3,5)P2). Catalyzes the dephosphorylation of phosphatidylinositol 3,5-bisphosphate (PtdIns(3,5)P2) to form phosphatidylinositol 3-phosphate. Has serine-protein phosphatase activity acting on PIKfyve to stimulate its lipid kinase activity, its catalytically activity being required for maximal PI(3,5)P2 production. In vitro, hydrolyzes all three D5-phosphorylated polyphosphoinositide and although displaying preferences for PtdIns(3,5)P2, it is capable of hydrolyzing PtdIns(3,4,5)P3 and PtdIns(4,5)P2, at least in vitro. In Homo sapiens (Human), this protein is Polyphosphoinositide phosphatase.